Reading from the N-terminus, the 321-residue chain is Lipoyl synthase (321 aa).

[4Fe-4S] cluster-binding residues include cysteine 68, cysteine 73, cysteine 79, cysteine 94, cysteine 98, cysteine 101, and serine 308. A Radical SAM core domain is found at 80-297 (FNHGTATFMI…KEIALELGFT (218 aa)).

The protein belongs to the radical SAM superfamily. Lipoyl synthase family. The cofactor is [4Fe-4S] cluster.

The protein resides in the cytoplasm. It carries out the reaction [[Fe-S] cluster scaffold protein carrying a second [4Fe-4S](2+) cluster] + N(6)-octanoyl-L-lysyl-[protein] + 2 oxidized [2Fe-2S]-[ferredoxin] + 2 S-adenosyl-L-methionine + 4 H(+) = [[Fe-S] cluster scaffold protein] + N(6)-[(R)-dihydrolipoyl]-L-lysyl-[protein] + 4 Fe(3+) + 2 hydrogen sulfide + 2 5'-deoxyadenosine + 2 L-methionine + 2 reduced [2Fe-2S]-[ferredoxin]. It functions in the pathway protein modification; protein lipoylation via endogenous pathway; protein N(6)-(lipoyl)lysine from octanoyl-[acyl-carrier-protein]: step 2/2. Functionally, catalyzes the radical-mediated insertion of two sulfur atoms into the C-6 and C-8 positions of the octanoyl moiety bound to the lipoyl domains of lipoate-dependent enzymes, thereby converting the octanoylated domains into lipoylated derivatives. The polypeptide is Lipoyl synthase (Vibrio cholerae serotype O1 (strain ATCC 39541 / Classical Ogawa 395 / O395)).